The sequence spans 77 residues: Conotoxin VnMEKL-023 (77 aa).

The N-terminal stretch at 1-19 (MQKLTILLLVAAVLMSTQA) is a signal peptide. A propeptide spanning residues 20 to 37 (LIKGGGEKRPKEKIRFLS) is cleaved from the precursor. Disulfide bonds link cysteine 51–cysteine 65, cysteine 58–cysteine 69, and cysteine 64–cysteine 74.

It belongs to the conotoxin O2 superfamily. In terms of tissue distribution, expressed by the venom duct.

It localises to the secreted. This Conus ventricosus (Mediterranean cone) protein is Conotoxin VnMEKL-023.